The primary structure comprises 376 residues: Ribosomal RNA large subunit methyltransferase G (376 aa).

It belongs to the methyltransferase superfamily. RlmG family.

It is found in the cytoplasm. It carries out the reaction guanosine(1835) in 23S rRNA + S-adenosyl-L-methionine = N(2)-methylguanosine(1835) in 23S rRNA + S-adenosyl-L-homocysteine + H(+). Specifically methylates the guanine in position 1835 (m2G1835) of 23S rRNA. This is Ribosomal RNA large subunit methyltransferase G from Cronobacter sakazakii (strain ATCC BAA-894) (Enterobacter sakazakii).